A 249-amino-acid polypeptide reads, in one-letter code: Phosphate import ATP-binding protein PstB (249 aa).

Positions 4–244 (IQTKDLNLYY…PKDKRTEDYI (241 aa)) constitute an ABC transporter domain. ATP is bound at residue 36–43 (GPSGCGKS).

The protein belongs to the ABC transporter superfamily. Phosphate importer (TC 3.A.1.7) family. The complex is composed of two ATP-binding proteins (PstB), two transmembrane proteins (PstC and PstA) and a solute-binding protein (PstS).

Its subcellular location is the cell membrane. It carries out the reaction phosphate(out) + ATP + H2O = ADP + 2 phosphate(in) + H(+). Its function is as follows. Part of the ABC transporter complex PstSACB involved in phosphate import. Responsible for energy coupling to the transport system. The sequence is that of Phosphate import ATP-binding protein PstB from Clostridium acetobutylicum (strain ATCC 824 / DSM 792 / JCM 1419 / IAM 19013 / LMG 5710 / NBRC 13948 / NRRL B-527 / VKM B-1787 / 2291 / W).